We begin with the raw amino-acid sequence, 273 residues long: 2,3,4,5-tetrahydropyridine-2,6-dicarboxylate N-succinyltransferase (273 aa).

Substrate is bound by residues Arg104 and Asp141.

The protein belongs to the transferase hexapeptide repeat family. In terms of assembly, homotrimer.

Its subcellular location is the cytoplasm. The catalysed reaction is (S)-2,3,4,5-tetrahydrodipicolinate + succinyl-CoA + H2O = (S)-2-succinylamino-6-oxoheptanedioate + CoA. The protein operates within amino-acid biosynthesis; L-lysine biosynthesis via DAP pathway; LL-2,6-diaminopimelate from (S)-tetrahydrodipicolinate (succinylase route): step 1/3. The chain is 2,3,4,5-tetrahydropyridine-2,6-dicarboxylate N-succinyltransferase from Nitrosomonas eutropha (strain DSM 101675 / C91 / Nm57).